Here is a 348-residue protein sequence, read N- to C-terminus: Phosphatidylglycerophosphate phosphatase 1, chloroplastic/mitochondrial (348 aa).

Residues 1 to 58 constitute a chloroplast and mitochondrion transit peptide; it reads MQTPSMAASTTSYYPIPKSFLLSPPRHKRNPNLISCSTKPICSPPPPSSSSSSPLQTT. Residues 17 to 67 form a disordered region; it reads PKSFLLSPPRHKRNPNLISCSTKPICSPPPPSSSSSSPLQTTTTHRSQKQN. Over residues 55-67 the composition is skewed to polar residues; it reads LQTTTTHRSQKQN. Positions 184–188 match the Phosphoryl acceptor motif; the sequence is DKDNT.

It belongs to the HAD-like hydrolase superfamily. It depends on Mg(2+) as a cofactor. As to expression, mainly expressed in inflorescences (especially in pollen) and, to a lower extent, in leaves, stems and siliques, as well as, at low levels, in roots. Mostly expressed in hypocotyl, vasculatures, trichomes, guard cells and stigmas.

The protein localises to the plastid. Its subcellular location is the chloroplast. It localises to the mitochondrion. The catalysed reaction is a 1,2-diacyl-sn-glycero-3-phospho-(1'-sn-glycero-3'-phosphate) + H2O = a 1,2-diacyl-sn-glycero-3-phospho-(1'-sn-glycerol) + phosphate. It functions in the pathway phospholipid metabolism; phosphatidylglycerol biosynthesis; phosphatidylglycerol from CDP-diacylglycerol: step 2/2. Its function is as follows. Phosphatidylglycerophosphate (PGP) phosphatase involved in the biosynthesis of phosphatidylglycerol (PG), a phosphoglycerolipid predominantly present in chloroplastic thylakoid membranes and which has important photosynthetic function; seems to use PGP 34:3, PGP 34:2 and PGP 34:1 as substrates. Required for thylakoid membranes development and chloroplast function. Necessary for normal cell growth. Required for root growth and columella cells organization. This is Phosphatidylglycerophosphate phosphatase 1, chloroplastic/mitochondrial from Arabidopsis thaliana (Mouse-ear cress).